The following is a 335-amino-acid chain: tRNA N6-adenosine threonylcarbamoyltransferase (335 aa).

A divalent metal cation-binding residues include histidine 109, histidine 113, and tyrosine 130. Substrate-binding positions include 130-134, aspartate 162, glycine 177, glutamate 181, and asparagine 266; that span reads YVSGG. Aspartate 294 is an a divalent metal cation binding site.

Belongs to the KAE1 / TsaD family. Component of the EKC/KEOPS complex composed of at least GON7, TP53RK, TPRKB, OSGEP and LAGE3; the whole complex dimerizes. A divalent metal cation is required as a cofactor.

Its subcellular location is the cytoplasm. It is found in the nucleus. It carries out the reaction L-threonylcarbamoyladenylate + adenosine(37) in tRNA = N(6)-L-threonylcarbamoyladenosine(37) in tRNA + AMP + H(+). In terms of biological role, component of the EKC/KEOPS complex that is required for the formation of a threonylcarbamoyl group on adenosine at position 37 (t(6)A37) in tRNAs that read codons beginning with adenine. The complex is probably involved in the transfer of the threonylcarbamoyl moiety of threonylcarbamoyl-AMP (TC-AMP) to the N6 group of A37. OSGEP likely plays a direct catalytic role in this reaction, but requires other protein(s) of the complex to fulfill this activity. In Rattus norvegicus (Rat), this protein is tRNA N6-adenosine threonylcarbamoyltransferase (Osgep).